The chain runs to 586 residues: Glutamate--tRNA ligase (586 aa).

A disordered region spans residues 84–111 (LTDIESEDTTDTYDLPSLPGVSDDEPTQ). Acidic residues predominate over residues 85–94 (TDIESEDTTD). The 'HIGH' region motif lies at 119-129 (PNPNGPWHIGH).

The protein belongs to the class-I aminoacyl-tRNA synthetase family. Glutamate--tRNA ligase type 2 subfamily.

Its subcellular location is the cytoplasm. The catalysed reaction is tRNA(Glu) + L-glutamate + ATP = L-glutamyl-tRNA(Glu) + AMP + diphosphate. Catalyzes the attachment of glutamate to tRNA(Glu) in a two-step reaction: glutamate is first activated by ATP to form Glu-AMP and then transferred to the acceptor end of tRNA(Glu). In Haloquadratum walsbyi (strain DSM 16790 / HBSQ001), this protein is Glutamate--tRNA ligase.